The primary structure comprises 171 residues: Viral CASP8 and FADD-like apoptosis regulator (171 aa).

DED domains are found at residues 1–74 (MSHY…RIFG) and 92–171 (PFRC…NLQV).

As to quaternary structure, associates with the death-inducing signaling complex (DISC) formed by TNFRSF6, FADD and caspase-8. Interacts with FADD.

Inhibits TNFRSF1A, TNFRSF6, TNFRSF10 and TNFRSF12 induced apoptosis. May interfere with caspase-8 recruitment and activation at the death-inducing signaling complex (DISC). May lead to higher virus production and contribute to virus persistence and oncogenicity. This is Viral CASP8 and FADD-like apoptosis regulator from Equus caballus (Horse).